The primary structure comprises 135 residues: Retinol-binding protein 1 (135 aa).

An important for interaction with STRA6 region spans residues 22 to 32; sequence RALDVNVALRK. All-trans-retinol contacts are provided by K41, M63, and Q109.

It belongs to the calycin superfamily. Fatty-acid binding protein (FABP) family. As to quaternary structure, interacts (only as retinol-free apoprotein) with STRA6.

It localises to the cytoplasm. The protein resides in the lipid droplet. In terms of biological role, cytoplasmic retinol-binding protein. Accepts retinol from the transport protein STRA6, and thereby contributes to retinol uptake, storage and retinoid homeostasis. This Bos taurus (Bovine) protein is Retinol-binding protein 1 (RBP1).